The primary structure comprises 299 residues: Urease accessory protein UreD (299 aa).

Belongs to the UreD family. As to quaternary structure, ureD, UreF and UreG form a complex that acts as a GTP-hydrolysis-dependent molecular chaperone, activating the urease apoprotein by helping to assemble the nickel containing metallocenter of UreC. The UreE protein probably delivers the nickel.

It localises to the cytoplasm. In terms of biological role, required for maturation of urease via the functional incorporation of the urease nickel metallocenter. The sequence is that of Urease accessory protein UreD from Haloarcula marismortui (strain ATCC 43049 / DSM 3752 / JCM 8966 / VKM B-1809) (Halobacterium marismortui).